The following is a 189-amino-acid chain: MNPISLLFLALAMSTDAFAAALGKGASLHKPRFIEALRTGLIFGAIETITPVIGWGIGQVAARFAESWDHWIAFTLLLVLGLHMIYNGIKHDDDEEQEKPGQHSFWILAVTAFATSIDALAVGVGLAFVDVNIVIAALAIGLATTVMVTIGVMLGRVLGTMVGKRAEIVGGIVLIIVGATILYEHLSAA.

A run of 6 helical transmembrane segments spans residues 3–23 (PISL…AALG), 41–61 (LIFG…GQVA), 69–89 (DHWI…YNGI), 105–125 (FWIL…VGVG), 133–153 (IVIA…IGVM), and 168–188 (IVGG…HLSA).

The protein belongs to the MntP (TC 9.B.29) family.

It localises to the cell inner membrane. Its function is as follows. Probably functions as a manganese efflux pump. This Pseudomonas savastanoi pv. phaseolicola (strain 1448A / Race 6) (Pseudomonas syringae pv. phaseolicola (strain 1448A / Race 6)) protein is Putative manganese efflux pump MntP.